Here is a 514-residue protein sequence, read N- to C-terminus: MVAEFQIASAQSSALTSTEEEHCSINSDKAAKLDLELTSERKNDGKQSHEVTFNEDIADPEDIARHMSTARRYYISSLITFTSMVITMISSSWTLPSTHIIEHFHISHEVSTLGITLYVFGLGIGPLFLSPLSELYGRRITFLYALTLSIIWQCLTIWSKTITGVMFGRFLSGFFGSAFLSVAGGAIADIFDKDQIGIPMAIYTTSAFLGPSLGPIIGGALYHQSYKWTFITLLITSGCCLVMIIFTIPETYKPMLLIRKAKRLRKEKNDQRYYAVLEVTREQTSLLSAIFLSTKRPFGLLLRDRMMGVLCFYTGLELAIIYLYFVAFPYVFKKLYNFGPMEIACSYIGIMVGMILSAPTCLLFQKTFEWRVKRNNGVKTPEMRFEPLFYGAFLTPVGLFIFAFTCYKHVHWIAPIIGSAIFGSGVYFVFTGVFAYTVDAYRRYAASGMACNTFVRCIMAGVFPLFGLQMYKSMGVNWAGFLLAMVTVAMIPVPFLFTKYGARLRAKSPYAWDD.

At 1 to 74 (MVAEFQIASA…RHMSTARRYY (74 aa)) the chain is on the cytoplasmic side. The helical transmembrane segment at 75 to 95 (ISSLITFTSMVITMISSSWTL) threads the bilayer. Residues 96-111 (PSTHIIEHFHISHEVS) lie on the Extracellular side of the membrane. A helical transmembrane segment spans residues 112 to 132 (TLGITLYVFGLGIGPLFLSPL). The Cytoplasmic segment spans residues 133–141 (SELYGRRIT). A helical membrane pass occupies residues 142–162 (FLYALTLSIIWQCLTIWSKTI). The Extracellular portion of the chain corresponds to 163–170 (TGVMFGRF). Residues 171-191 (LSGFFGSAFLSVAGGAIADIF) form a helical membrane-spanning segment. Residues 192 to 200 (DKDQIGIPM) are Cytoplasmic-facing. The chain crosses the membrane as a helical span at residues 201–221 (AIYTTSAFLGPSLGPIIGGAL). Residues 222-227 (YHQSYK) are Extracellular-facing. Residues 228–248 (WTFITLLITSGCCLVMIIFTI) form a helical membrane-spanning segment. At 249–307 (PETYKPMLLIRKAKRLRKEKNDQRYYAVLEVTREQTSLLSAIFLSTKRPFGLLLRDRMM) the chain is on the cytoplasmic side. Residues 308-328 (GVLCFYTGLELAIIYLYFVAF) traverse the membrane as a helical segment. At 329–342 (PYVFKKLYNFGPME) the chain is on the extracellular side. Residues 343–363 (IACSYIGIMVGMILSAPTCLL) traverse the membrane as a helical segment. Residues 364–386 (FQKTFEWRVKRNNGVKTPEMRFE) are Cytoplasmic-facing. The chain crosses the membrane as a helical span at residues 387 to 407 (PLFYGAFLTPVGLFIFAFTCY). Residues 408–412 (KHVHW) are Extracellular-facing. The helical transmembrane segment at 413–433 (IAPIIGSAIFGSGVYFVFTGV) threads the bilayer. Residues 434 to 447 (FAYTVDAYRRYAAS) are Cytoplasmic-facing. The helical transmembrane segment at 448–468 (GMACNTFVRCIMAGVFPLFGL) threads the bilayer. Topologically, residues 469-477 (QMYKSMGVN) are extracellular. Residues 478–498 (WAGFLLAMVTVAMIPVPFLFT) form a helical membrane-spanning segment. The Cytoplasmic segment spans residues 499 to 514 (KYGARLRAKSPYAWDD).

This sequence belongs to the major facilitator superfamily. CAR1 family.

It localises to the membrane. Probable drug/proton antiporter. The sequence is that of Probable drug/proton antiporter YHK8 (YHK8) from Saccharomyces cerevisiae (strain ATCC 204508 / S288c) (Baker's yeast).